A 370-amino-acid polypeptide reads, in one-letter code: UDP-N-acetylglucosamine--N-acetylmuramyl-(pentapeptide) pyrophosphoryl-undecaprenol N-acetylglucosamine transferase (370 aa).

UDP-N-acetyl-alpha-D-glucosamine contacts are provided by residues 15–17 (TGG), Asn129, Arg171, Ser200, Ile256, and Gln301.

Belongs to the glycosyltransferase 28 family. MurG subfamily.

It is found in the cell membrane. The enzyme catalyses di-trans,octa-cis-undecaprenyl diphospho-N-acetyl-alpha-D-muramoyl-L-alanyl-D-glutamyl-meso-2,6-diaminopimeloyl-D-alanyl-D-alanine + UDP-N-acetyl-alpha-D-glucosamine = di-trans,octa-cis-undecaprenyl diphospho-[N-acetyl-alpha-D-glucosaminyl-(1-&gt;4)]-N-acetyl-alpha-D-muramoyl-L-alanyl-D-glutamyl-meso-2,6-diaminopimeloyl-D-alanyl-D-alanine + UDP + H(+). It participates in cell wall biogenesis; peptidoglycan biosynthesis. Its function is as follows. Cell wall formation. Catalyzes the transfer of a GlcNAc subunit on undecaprenyl-pyrophosphoryl-MurNAc-pentapeptide (lipid intermediate I) to form undecaprenyl-pyrophosphoryl-MurNAc-(pentapeptide)GlcNAc (lipid intermediate II). The polypeptide is UDP-N-acetylglucosamine--N-acetylmuramyl-(pentapeptide) pyrophosphoryl-undecaprenol N-acetylglucosamine transferase (Caldicellulosiruptor saccharolyticus (strain ATCC 43494 / DSM 8903 / Tp8T 6331)).